A 339-amino-acid polypeptide reads, in one-letter code: Nucleoid-associated protein Asuc_0779 (339 aa).

This sequence belongs to the YejK family.

Its subcellular location is the cytoplasm. The protein localises to the nucleoid. The sequence is that of Nucleoid-associated protein Asuc_0779 from Actinobacillus succinogenes (strain ATCC 55618 / DSM 22257 / CCUG 43843 / 130Z).